The following is a 187-amino-acid chain: UPF0200 protein PYRAB09750 (187 aa).

Position 7–14 (7–14 (GMPGSGKG)) interacts with ATP.

The protein belongs to the UPF0200 family.

This Pyrococcus abyssi (strain GE5 / Orsay) protein is UPF0200 protein PYRAB09750.